Here is a 460-residue protein sequence, read N- to C-terminus: uncharacterized protein (460 aa).

Positions 6-64 (PVKKNSTYNLYITGMGTKGEGIGKINNFTIFVTGAILGEEVEVNIIKVNKNYAVGKLLN) constitute a TRAM domain. 4 residues coordinate [4Fe-4S] cluster: Cys77, Cys83, Cys86, and Cys163. Gln287, Tyr316, Glu337, and Asp385 together coordinate S-adenosyl-L-methionine. Catalysis depends on Cys412, which acts as the Nucleophile.

It belongs to the class I-like SAM-binding methyltransferase superfamily. RNA M5U methyltransferase family.

This is an uncharacterized protein from Clostridium tetani (strain Massachusetts / E88).